Reading from the N-terminus, the 34-residue chain is Leader peptide SpeFL (34 aa).

An Ornithine recognition loop motif is present at residues His-10 to His-16. L-ornithine is bound at residue Arg-13.

This sequence belongs to the speF operon leader peptide family. Binds ornithine in stalled 70S ribosomes, blocking the upper two-thirds of the exit tunnel. Contacts 23S rRNA and ribosomal proteins L4 and L22.

In terms of biological role, a small protein (arrest peptide) encoded upstream of inducible ornithine carboxylase gene (speF) that controls expression of downstream genes (speF and potE) by transcriptional and translational attenuation. Its expression controls transcription and translation of downstream SpeF; translation pausing at low Arg levels on this mRNA prevents premature Rho-dependent transcription termination of speF and also enhances SprF translation by preventing sequestration of its ribosome-binding site. In the presence of high Arg levels translation of this protein allows the formation of an speF mRNA structure that is degraded by RNase G. The sequence is that of Leader peptide SpeFL from Salmonella typhimurium (strain SL1344).